The sequence spans 513 residues: Probable DNA ligase (513 aa).

Glu-215 serves as a coordination point for ATP. The active-site N6-AMP-lysine intermediate is the Lys-217. The ATP site is built by Arg-222, Arg-237, Glu-266, Phe-306, Arg-378, and Lys-384.

Belongs to the ATP-dependent DNA ligase family. The cofactor is Mg(2+).

The enzyme catalyses ATP + (deoxyribonucleotide)n-3'-hydroxyl + 5'-phospho-(deoxyribonucleotide)m = (deoxyribonucleotide)n+m + AMP + diphosphate.. Its function is as follows. DNA ligase that seals nicks in double-stranded DNA during DNA replication, DNA recombination and DNA repair. The chain is Probable DNA ligase from Mycobacterium marinum (strain ATCC BAA-535 / M).